Consider the following 493-residue polypeptide: Endoglucanase 23 (493 aa).

The signal sequence occupies residues Met1–Pro23. Asp78 acts as the Nucleophile in catalysis. Residue Asn297 is glycosylated (N-linked (GlcNAc...) asparagine). Residue His410 is part of the active site. Asn465 carries N-linked (GlcNAc...) asparagine glycosylation. Glu470 is an active-site residue.

This sequence belongs to the glycosyl hydrolase 9 (cellulase E) family.

It is found in the secreted. The enzyme catalyses Endohydrolysis of (1-&gt;4)-beta-D-glucosidic linkages in cellulose, lichenin and cereal beta-D-glucans.. This is Endoglucanase 23 from Arabidopsis thaliana (Mouse-ear cress).